A 290-amino-acid polypeptide reads, in one-letter code: Nucleoid occlusion protein (290 aa).

The H-T-H motif DNA-binding region spans 153 to 172 (EALAQRLGKGQSTIANKLRL).

This sequence belongs to the ParB family.

The protein resides in the cytoplasm. It localises to the nucleoid. Functionally, effects nucleoid occlusion by binding relatively nonspecifically to DNA and preventing the assembly of the division machinery in the vicinity of the nucleoid, especially under conditions that disturb the cell cycle. It helps to coordinate cell division and chromosome segregation by preventing the formation of the Z ring through the nucleoid, which would cause chromosome breakage. The sequence is that of Nucleoid occlusion protein from Bacillus cereus (strain G9842).